A 542-amino-acid polypeptide reads, in one-letter code: Protein MGF 505-10R (542 aa).

This sequence belongs to the asfivirus MGF 505 family.

Its function is as follows. Plays a role in virus cell tropism, and may be required for efficient virus replication in macrophages. In Ornithodoros (relapsing fever ticks), this protein is Protein MGF 505-10R.